The chain runs to 201 residues: UPF0301 protein MMAR_0053 (201 aa).

The protein belongs to the UPF0301 (AlgH) family.

This Mycobacterium marinum (strain ATCC BAA-535 / M) protein is UPF0301 protein MMAR_0053.